The primary structure comprises 397 residues: tRNA(Ile)-lysidine synthase (397 aa).

44-49 (SGGADS) contributes to the ATP binding site.

It belongs to the tRNA(Ile)-lysidine synthase family.

It localises to the cytoplasm. It carries out the reaction cytidine(34) in tRNA(Ile2) + L-lysine + ATP = lysidine(34) in tRNA(Ile2) + AMP + diphosphate + H(+). In terms of biological role, ligates lysine onto the cytidine present at position 34 of the AUA codon-specific tRNA(Ile) that contains the anticodon CAU, in an ATP-dependent manner. Cytidine is converted to lysidine, thus changing the amino acid specificity of the tRNA from methionine to isoleucine. This chain is tRNA(Ile)-lysidine synthase, found in Rhodopirellula baltica (strain DSM 10527 / NCIMB 13988 / SH1).